A 547-amino-acid chain; its full sequence is MPPALRPAAPSRSLLRYLRAQSEGLSFAPTCRAAAERHPALQCRHGCTAGGSTRPPRQPSSSTTTRSLSTATPPKRTQLRAGLVDLEAILPKSLRKQRTTKSLLALPPPAGSLRFSSNQSSDCDSKRPKLREWLFGNGEKKGPPDTRLNDDDIRVALEEESGSIFQRRALTAKAAMDPRLRCTEVDENGNVVMVDGELKKSELIAKYGLLPRDLRKIDSSNLPHILIRPSAILLNLLHLKVLIKHDCVLLFDVYGSKSSYPQSAFMYDLQGKLQQKQSSGANSLPYEFRALEAVLMSVTSELEADFEAVRDPVIRILSELEDDIDREKLRVLLVLSKRVSTFEQKAKLVRDAIEELLEADDDLASMYLTEKTHDLYRGEDDHTEIELLLESYNKICDEVVEEASNLVSSIRNTEEIIRAILDANRNSLMLLDLKFSVGTLGLAMGTFLASWYGMNLENFIEETNWGFAMVTSVSTVASLIVCWYGLVKLRKVQRVKMGDLHNRNAPNHWFRDESTDVLLDPSNRERLRRINSMKSAQQKRSTSKKWF.

A mitochondrion-targeting transit peptide spans 1–75; that stretch reads MPPALRPAAP…RSLSTATPPK (75 aa). Disordered stretches follow at residues 46 to 76 and 105 to 125; these read GCTA…PPKR and ALPP…DCDS. The segment covering 52–74 has biased composition (low complexity); sequence STRPPRQPSSSTTTRSLSTATPP. The chain crosses the membrane as a helical span at residues 428 to 448; sequence LMLLDLKFSVGTLGLAMGTFL. Positions 452–455 match the YGMN motif; sequence YGMN. Residues 467–487 traverse the membrane as a helical segment; that stretch reads FAMVTSVSTVASLIVCWYGLV.

It belongs to the CorA metal ion transporter (MIT) (TC 1.A.35) family. As to quaternary structure, homopentamer. Forms homooligomers. Interacts with MFM1.

Its subcellular location is the mitochondrion inner membrane. Functionally, high-conductance magnesium-selective channel that mediates the influx of magnesium into the mitochondrial matrix. Essential for the splicing of mRNA group II introns in mitochondria by affecting mitochondrial magnesium concentrations, which are critical for group II intron splicing. It also suppresses a variety of mitochondrial intron mutations and its absence may disturb the assembly of mitochondrial membrane complexes. This Neurospora crassa (strain ATCC 24698 / 74-OR23-1A / CBS 708.71 / DSM 1257 / FGSC 987) protein is Mitochondrial inner membrane magnesium transporter mrs2 (mrs2).